The sequence spans 270 residues: MNAFTFPLLLAFCAFAHGAWVLDWEDEFNGGNLADRWNFELGCNGWGNNELQCYTDNRGANARQEDGKLVISAVREWWGDGVNPDKEFTSARMTTKANWLHGKFEMRARLPKGKHLWPAFWMMPQNSEYGGWPRSGEIDITEYRGQRPQQILGTLHFGAAPDNKGDVGTGERDFPIDFSADFHTFGLDWSPDSMQWLLDDQVYHTESLQRNFWDGVYNQNGSPFDKNFFIILNLAVGGNFFGGEPFDPSESDGWAKNTFEVEYVKKWTWN.

A signal peptide spans 1–18 (MNAFTFPLLLAFCAFAHG). Positions 22–270 (LDWEDEFNGG…VEYVKKWTWN (249 aa)) constitute a GH16 domain. Catalysis depends on glutamate 137, which acts as the Nucleophile. The active-site Proton donor is glutamate 142.

Belongs to the glycosyl hydrolase 16 family.

Its subcellular location is the secreted. The catalysed reaction is Hydrolysis of (1-&gt;3)-beta-D-glucosidic linkages in (1-&gt;3)-beta-D-glucans.. Ca(2+) does not affect the enzyme activity nor the thermostability. Other cations, such as Mg(2+), Mn(2+), Cu(2+), Zn(2+), Ag(+) or Hg(2+) do not cause any serious adverse effect on the activity. Also no significant change in the activity in response to the addition of 1 mM EDTA. Its function is as follows. Hydrolyzes laminarin majorily to glucose (G1), laminaribiose (L2), laminaritriose (L3), laminaritetraose (L4) and laminaripentaose (L5). Hydrolyzes laminarioligosaccharides L3, L4, L5 and laminarihexaose (L6) to G1, L2 and L3. Hardly hydrolyzes L2. Does not hydrolyze lichenan, pustulan, carboxymethyl cellulose, locust bean gum or soluble starch. This is Glucan endo-1,3-beta-glucosidase from Cryptopygus antarcticus (Antarctic springtail).